The following is a 476-amino-acid chain: Amino acid permease 3 (476 aa).

Residues 1 to 33 (MVQNHQTVLAVDMPQTGGSKYLDDDGKNKRTGS) lie on the Cytoplasmic side of the membrane. The chain crosses the membrane as a helical span at residues 34–54 (VWTASAHIITAVIGSGVLSLA). Residues 55-57 (WAT) lie on the Extracellular side of the membrane. A helical transmembrane segment spans residues 58 to 78 (AQLGWLAGPVVMLLFSAVTYF). Residues 79–122 (TSSLLAACYRSGDPISGKRNYTYMDAVRSNLGGVKVTLCGIVQY) lie on the Cytoplasmic side of the membrane. A helical transmembrane segment spans residues 123–143 (LNIFGVAIGYTIASAISMMAI). Residues 144–166 (KRSNCFHKSGGKDPCHMNSNPYM) lie on the Extracellular side of the membrane. The next 2 membrane-spanning stretches (helical) occupy residues 167–187 (IAFG…QLWW) and 188–208 (LSIL…ALGI). The Extracellular portion of the chain corresponds to 209-277 (AQVVVNGKVK…EEKTMKKATL (69 aa)). A helical membrane pass occupies residues 278 to 298 (VSVSVTTMFYMLCGCMGYAAF). The Cytoplasmic segment spans residues 299–300 (GD). The helical transmembrane segment at 301–321 (LSPGNLLTGFGFYNPYWLLDI) threads the bilayer. The Extracellular segment spans residues 322 to 324 (ANA). The chain crosses the membrane as a helical span at residues 325 to 345 (AIVIHLIGAYQVYCQPLFAFI). At 346–384 (EKQASIQFPDSEFIAKDIKIPIPGFKPLRLNVFRLIWRT) the chain is on the cytoplasmic side. 2 helical membrane passes run 385-405 (VFVI…DVVG) and 406-426 (LLGA…MYIA). Residues 427-441 (QKKIPRWSTRWVCLQ) lie on the Cytoplasmic side of the membrane. A helical transmembrane segment spans residues 442–462 (VFSLGCLVVSIAAAAGSIAGV). Residues 463 to 476 (LLDLKSYKPFRSEY) lie on the Extracellular side of the membrane.

The protein belongs to the amino acid/polyamine transporter 2 family. Amino acid/auxin permease (AAAP) (TC 2.A.18.2) subfamily. As to expression, expressed in the root phloem. Detected in stamens, in cotyledons, and in major veins of mature leaves.

It is found in the cell membrane. The protein resides in the nucleus membrane. The protein localises to the endomembrane system. Its activity is regulated as follows. Inhibited by carbonylcyanide m-chlorophenylhydrazone and 2,4-dinitrophenol. In terms of biological role, amino acid-proton symporter. Stereospecific transporter with a broad specificity for GABA, tryptophan and both neutral and basic amino acids. High affinity transport of cationic amino acids. The sequence is that of Amino acid permease 3 (AAP3) from Arabidopsis thaliana (Mouse-ear cress).